We begin with the raw amino-acid sequence, 340 residues long: Peroxisomal coenzyme A diphosphatase 1, peroxisomal (340 aa).

The N-terminal 7 residues, 1-7 (MILSQRR), are a transit peptide targeting the peroxisome. Residues 37-199 (KRNSAVIILL…DEDVKSYQAE (163 aa)) form the Nudix hydrolase domain. A Nudix box motif is present at residues 77–99 (GKADYFQETFESVARREAEEEIG). Residues Glu-93 and Glu-97 each coordinate Mg(2+).

This sequence belongs to the Nudix hydrolase family. PCD1 subfamily. It depends on Mn(2+) as a cofactor. The cofactor is Mg(2+). In terms of processing, the size of the cleaved transit peptide can be of 7 or 8 residues.

It localises to the peroxisome. The enzyme catalyses CoA + H2O = (R)-4'-phosphopantetheine + adenosine 3',5'-bisphosphate + 2 H(+). It catalyses the reaction CoA-disulfide + H2O = 4'-phosphopantetheinyl-CoA disulfide + adenosine 3',5'-bisphosphate + 2 H(+). The catalysed reaction is 8-oxo-dGTP + H2O = 8-oxo-dGMP + diphosphate + H(+). It carries out the reaction 2-oxo-dATP + H2O = 2-oxo-dAMP + diphosphate + H(+). Functionally, diphosphatase (pyrophosphatase) with specificity for coenzyme A and CoA derivatives. Catalyzes the hydrolysis of the diphosphate linkage in CoA to give 3',5'-ADP and 4'-phosphopantetheine. Prefers oxidized CoA disulfide (CoASSCoA) over CoA as a substrate. May be required to remove potentially toxic oxidized CoA disulfide from peroxisomes to maintain the capacity for beta-oxidation of fatty acids. Can also hydrolyze 8-oxo-dGTP and 2-OH-dATP in vitro; therefore it may function as a sanitizing enzyme for oxidized nucleotides and may contribute to prevention of spontaneous mutagenesis due to the misincorporation of these oxidized nucleotides during DNA synthesis. Shows moderate activity in vitro with several short chain acyl-CoA esters and very low activity on 3'-dephospho-CoA while is not active with (deoxy)nucleoside 5'-triphosphates, nucleoside 5'-di- or monophosphates, diadenosine polyphosphates, nucleoside 5'-diphosphosugars, cytidine 5'-diphosphoalcohols, NAD(+), NADH, or FAD. The polypeptide is Peroxisomal coenzyme A diphosphatase 1, peroxisomal (PCD1) (Saccharomyces cerevisiae (strain ATCC 204508 / S288c) (Baker's yeast)).